We begin with the raw amino-acid sequence, 201 residues long: Sorting nexin-10 (201 aa).

The required for interaction with ATP6V1D stretch occupies residues 8–125 (EEFVSVWVRD…SLHLFLQSHL (118 aa)). Residues 10–127 (FVSVWVRDPR…HLFLQSHLNS (118 aa)) enclose the PX domain. The a 1,2-diacyl-sn-glycero-3-phospho-(1D-myo-inositol-3-phosphate) site is built by Arg-53, Lys-79, and Arg-94. The segment at 156 to 201 (FPEEDEEGKKENDIDYDSESSSSGLGHSSDDSSSHGCKVNTAPQES) is disordered.

The protein belongs to the sorting nexin family. Interacts with ATP6V1D; may play a role in ciliogenesis.

It localises to the cytoplasm. The protein localises to the endosome membrane. The protein resides in the cytoskeleton. Its subcellular location is the microtubule organizing center. It is found in the centrosome. Its function is as follows. Probable phosphoinositide-binding protein involved in protein sorting and membrane trafficking in endosomes. Plays a role in cilium biogenesis through regulation of the transport and the localization of proteins to the cilium. Required for the localization to the cilium of V-ATPase subunit ATP6V1D and ATP6V0D1, and RAB8A. Involved in osteoclast differentiation and therefore bone resorption. This chain is Sorting nexin-10 (SNX10), found in Homo sapiens (Human).